We begin with the raw amino-acid sequence, 677 residues long: Methionine--tRNA ligase (677 aa).

The 'HIGH' region motif lies at 15–25 (PYANGSIHLGH). C146, C149, C159, and C162 together coordinate Zn(2+). The short motif at 333 to 337 (KMSKS) is the 'KMSKS' region element. Residue K336 coordinates ATP. The tRNA-binding domain maps to 575-677 (DFAKVDLRVA…AGAKPGHQVK (103 aa)).

Belongs to the class-I aminoacyl-tRNA synthetase family. MetG type 1 subfamily. As to quaternary structure, homodimer. Zn(2+) serves as cofactor.

It localises to the cytoplasm. It catalyses the reaction tRNA(Met) + L-methionine + ATP = L-methionyl-tRNA(Met) + AMP + diphosphate. In terms of biological role, is required not only for elongation of protein synthesis but also for the initiation of all mRNA translation through initiator tRNA(fMet) aminoacylation. The chain is Methionine--tRNA ligase from Escherichia fergusonii (strain ATCC 35469 / DSM 13698 / CCUG 18766 / IAM 14443 / JCM 21226 / LMG 7866 / NBRC 102419 / NCTC 12128 / CDC 0568-73).